Reading from the N-terminus, the 73-residue chain is Disintegrin cerastin (73 aa).

A Disintegrin domain is found at 1 to 73 (EAGEECDCGT…ADCPRNGLYG (73 aa)). 6 cysteine pairs are disulfide-bonded: Cys6-Cys21, Cys8-Cys16, Cys15-Cys38, Cys29-Cys35, Cys34-Cys59, and Cys47-Cys66. Residues 51 to 53 (RGD) carry the Cell attachment site motif.

The protein belongs to the venom metalloproteinase (M12B) family. P-II subfamily. P-IIa sub-subfamily. Monomer (disintegrin). In terms of tissue distribution, expressed by the venom gland.

The protein localises to the secreted. Its function is as follows. Inhibits fibrinogen interaction with platelets. Acts by binding to alpha-IIb/beta-3 (ITGA2B/ITGB3) on the platelet surface and inhibits aggregation induced by ADP, thrombin, platelet-activating factor and collagen. The sequence is that of Disintegrin cerastin from Crotalus cerastes cerastes (Mojave desert sidewinder).